Here is a 467-residue protein sequence, read N- to C-terminus: Bifunctional protein GlmU (467 aa).

The tract at residues 1-229 (MEKNTIILAA…FSESMGVNDR (229 aa)) is pyrophosphorylase. Residues 8 to 11 (LAAG), lysine 22, glutamine 72, 77 to 78 (GT), 100 to 102 (SGD), glycine 139, glutamate 154, asparagine 169, and asparagine 227 contribute to the UDP-N-acetyl-alpha-D-glucosamine site. Position 102 (aspartate 102) interacts with Mg(2+). Residue asparagine 227 participates in Mg(2+) binding. Positions 230 to 250 (LALSKATKVMQRRINEEHMVN) are linker. The tract at residues 251-467 (GVTIIDPENT…ALKAEEENNK (217 aa)) is N-acetyltransferase. Arginine 332 and lysine 350 together coordinate UDP-N-acetyl-alpha-D-glucosamine. The active-site Proton acceptor is the histidine 362. Residues tyrosine 365 and asparagine 376 each coordinate UDP-N-acetyl-alpha-D-glucosamine. Acetyl-CoA is bound by residues 385 to 386 (NY), serine 404, alanine 422, and arginine 439.

This sequence in the N-terminal section; belongs to the N-acetylglucosamine-1-phosphate uridyltransferase family. The protein in the C-terminal section; belongs to the transferase hexapeptide repeat family. Homotrimer. Mg(2+) is required as a cofactor.

The protein localises to the cytoplasm. The catalysed reaction is alpha-D-glucosamine 1-phosphate + acetyl-CoA = N-acetyl-alpha-D-glucosamine 1-phosphate + CoA + H(+). It carries out the reaction N-acetyl-alpha-D-glucosamine 1-phosphate + UTP + H(+) = UDP-N-acetyl-alpha-D-glucosamine + diphosphate. It functions in the pathway nucleotide-sugar biosynthesis; UDP-N-acetyl-alpha-D-glucosamine biosynthesis; N-acetyl-alpha-D-glucosamine 1-phosphate from alpha-D-glucosamine 6-phosphate (route II): step 2/2. The protein operates within nucleotide-sugar biosynthesis; UDP-N-acetyl-alpha-D-glucosamine biosynthesis; UDP-N-acetyl-alpha-D-glucosamine from N-acetyl-alpha-D-glucosamine 1-phosphate: step 1/1. It participates in bacterial outer membrane biogenesis; LPS lipid A biosynthesis. Catalyzes the last two sequential reactions in the de novo biosynthetic pathway for UDP-N-acetylglucosamine (UDP-GlcNAc). The C-terminal domain catalyzes the transfer of acetyl group from acetyl coenzyme A to glucosamine-1-phosphate (GlcN-1-P) to produce N-acetylglucosamine-1-phosphate (GlcNAc-1-P), which is converted into UDP-GlcNAc by the transfer of uridine 5-monophosphate (from uridine 5-triphosphate), a reaction catalyzed by the N-terminal domain. This is Bifunctional protein GlmU from Pediococcus pentosaceus (strain ATCC 25745 / CCUG 21536 / LMG 10740 / 183-1w).